Here is a 171-residue protein sequence, read N- to C-terminus: Inosine/xanthosine triphosphatase (171 aa).

8–13 (TTNPAK) lines the substrate pocket. Glu38 and Glu68 together coordinate Mg(2+). 68-69 (EA) serves as a coordination point for substrate.

Belongs to the YjjX NTPase family. As to quaternary structure, homodimer. Requires Mg(2+) as cofactor. The cofactor is Mn(2+).

The enzyme catalyses XTP + H2O = XDP + phosphate + H(+). It carries out the reaction ITP + H2O = IDP + phosphate + H(+). Its function is as follows. Phosphatase that hydrolyzes non-canonical purine nucleotides such as XTP and ITP to their respective diphosphate derivatives. Probably excludes non-canonical purines from DNA/RNA precursor pool, thus preventing their incorporation into DNA/RNA and avoiding chromosomal lesions. This Salmonella arizonae (strain ATCC BAA-731 / CDC346-86 / RSK2980) protein is Inosine/xanthosine triphosphatase (yjjX).